The chain runs to 1537 residues: Dual oxidase (1537 aa).

A disordered region spans residues 1 to 29 (MSVPSAPHQRAESKNRVPRPGQKNRKLPK). Residues 1 to 626 (MSVPSAPHQR…EGYDYFSGSE (626 aa)) lie on the Extracellular side of the membrane. The interval 63-628 (MYSQTEKQRY…YDYFSGSELM (566 aa)) is peroxidase-like; mediates peroxidase activity. N-linked (GlcNAc...) asparagine glycosylation is found at Asn-133, Asn-233, Asn-577, and Asn-606. Residues 627 to 647 (LMFIYVCVFLGFVPILCAGAG) form a helical membrane-spanning segment. The Cytoplasmic portion of the chain corresponds to 648–1029 (YCVVKLQNSK…ITFLEENRQN (382 aa)). A Phosphoserine modification is found at Ser-826. EF-hand domains are found at residues 855–890 (PNDMFVRKMFNIVDKDQDGRISFQEFLETVVLFSRG), 891–926 (KTDDKLRIIFDMCDNDRNGVIDKGELSEMMRSLVEI), and 936–971 (QVTELIDGMFQDVGLEHKNHLTYQDFKLMMKEYKGD). 9 residues coordinate Ca(2+): Asp-868, Asp-870, Asp-872, Arg-874, Glu-879, Asp-904, Asp-906, Asn-908, and Glu-915. The chain crosses the membrane as a helical span at residues 1030 to 1050 (IFYLFLFYVVTIVLFVERFIH). Topologically, residues 1051–1065 (YSFMAEHTDLRHIMG) are extracellular. Residues 1066–1086 (VGIAITRGSAASLSFCYSLLL) form a helical membrane-spanning segment. One can recognise a Ferric oxidoreductase domain in the interval 1078 to 1218 (LSFCYSLLLL…TLYIGLYLLS (141 aa)). Over 1087–1116 (LTMSRNLITKLKEFPIQQYIPLDSHIQFHK) the chain is Cytoplasmic. A Phosphotyrosine modification is found at Tyr-1105. The chain crosses the membrane as a helical span at residues 1117-1137 (IAACTALFFSVLHTVGHIVNF). At 1138-1171 (YHVSTQSHENLRCLTREVHFASDYKPDITFWLFQ) the chain is on the extracellular side. The helical transmembrane segment at 1172 to 1192 (TVTGTTGVMLFIIMCIIFVFA) threads the bilayer. The Cytoplasmic portion of the chain corresponds to 1193–1202 (HPTIRKKAYN). Residues 1203 to 1223 (FFWNMHTLYIGLYLLSLIHGL) traverse the membrane as a helical segment. The Extracellular portion of the chain corresponds to 1224-1230 (ARLTGPP). The chain crosses the membrane as a helical span at residues 1231–1251 (RFWMFFLGPGIVYTLDKIVSL). At 1252–1537 (RTKYMALDVI…YFIHHFENFG (286 aa)) the chain is on the cytoplasmic side. Residues 1253–1358 (TKYMALDVID…EGPFGGGNQD (106 aa)) form the FAD-binding FR-type domain.

The protein in the N-terminal section; belongs to the peroxidase family.

The protein resides in the membrane. The catalysed reaction is NADH + O2 + H(+) = H2O2 + NAD(+). The enzyme catalyses NADPH + O2 + H(+) = H2O2 + NADP(+). Peroxidase activity is inhibited by aminotriazole and azide. Its function is as follows. Plays a role in innate immunity limiting microbial proliferation in the gut. Acts downstream of a hh-signaling pathway to induce the production of reactive oxygen species (ROS) in response to intestinal bacterial infection. May generate antimicrobial oxidative burst through its peroxidase-like domain. This Drosophila melanogaster (Fruit fly) protein is Dual oxidase (Duox).